Reading from the N-terminus, the 268-residue chain is MSSSGSDKERETFVYMAKLSEQAERYDEMVETMKKVARVNSELTVEERNLLSVGYKNVIGARRASWRIMSSIEQKEESKGNESNVKQIKGYRQKVEDELANICQDILTIIDQHLIPHATSGEATVFYYKMKGDYYRYLAEFKTEQERKEAAEQSLKGYEAATQAASTELPSTHPIRLGLALNFSVFYYEIMNSPERACHLAKQAFDEAIAELDTLSEESYKDSTLIMQLLRDNLTLWTSDLPEDGGEDNIKTEESKQEQAKPADATEN.

Phosphoserine is present on residues Ser-70 and Ser-193. Residue Thr-214 is modified to Phosphothreonine. A disordered region spans residues 240-268; sequence DLPEDGGEDNIKTEESKQEQAKPADATEN. Basic and acidic residues predominate over residues 248–261; sequence DNIKTEESKQEQAK.

It belongs to the 14-3-3 family. As to expression, expressed in flowers.

Its subcellular location is the nucleus. It localises to the cytoplasm. Its function is as follows. Is associated with a DNA binding complex that binds to the G box, a well-characterized cis-acting DNA regulatory element found in plant genes. The sequence is that of 14-3-3-like protein GF14 iota from Arabidopsis thaliana (Mouse-ear cress).